The sequence spans 276 residues: Putative pyruvate, phosphate dikinase regulatory protein (276 aa).

150-157 (GVSRTSKT) provides a ligand contact to ADP.

It belongs to the pyruvate, phosphate/water dikinase regulatory protein family. PDRP subfamily.

The enzyme catalyses N(tele)-phospho-L-histidyl/L-threonyl-[pyruvate, phosphate dikinase] + ADP = N(tele)-phospho-L-histidyl/O-phospho-L-threonyl-[pyruvate, phosphate dikinase] + AMP + H(+). It catalyses the reaction N(tele)-phospho-L-histidyl/O-phospho-L-threonyl-[pyruvate, phosphate dikinase] + phosphate + H(+) = N(tele)-phospho-L-histidyl/L-threonyl-[pyruvate, phosphate dikinase] + diphosphate. In terms of biological role, bifunctional serine/threonine kinase and phosphorylase involved in the regulation of the pyruvate, phosphate dikinase (PPDK) by catalyzing its phosphorylation/dephosphorylation. This is Putative pyruvate, phosphate dikinase regulatory protein from Lacticaseibacillus casei (strain BL23) (Lactobacillus casei).